We begin with the raw amino-acid sequence, 136 residues long: Large ribosomal subunit protein uL16c (136 aa).

This sequence belongs to the universal ribosomal protein uL16 family. In terms of assembly, part of the 50S ribosomal subunit.

It is found in the plastid. The protein resides in the chloroplast. This Guizotia abyssinica (Niger) protein is Large ribosomal subunit protein uL16c.